The sequence spans 356 residues: Cysteine protease XCP2 (356 aa).

The N-terminal stretch at 1 to 26 (MALSSPSRILCFALALSAASLSLSFA) is a signal peptide. Residues 27–137 (SSHDYSIVGY…AEFAYRDVEA (111 aa)) constitute a propeptide, activation peptide. 3 cysteine pairs are disulfide-bonded: Cys159/Cys201, Cys193/Cys234, and Cys292/Cys343. Cys162 is a catalytic residue. Asn181 carries an N-linked (GlcNAc...) asparagine glycan. Residues His298 and Asn318 contribute to the active site.

This sequence belongs to the peptidase C1 family. Interacts with PRN2. Mostly expressed in roots, stems and flowers. Confined to tracheary elements, and specifically to xylem.

It localises to the vacuole. It is found in the cell membrane. Functionally, cysteine protease involved in xylem tracheary element (TE) autolysis during xylogenesis in roots. Participates in micro autolysis within the intact central vacuole before mega autolysis is initiated by tonoplast implosion. Involved in susceptibility to the bacterial plant pathogen Ralstonia solanacearum. The sequence is that of Cysteine protease XCP2 from Arabidopsis thaliana (Mouse-ear cress).